Consider the following 155-residue polypeptide: Ribosome maturation factor RimP (155 aa).

Belongs to the RimP family.

It is found in the cytoplasm. In terms of biological role, required for maturation of 30S ribosomal subunits. The protein is Ribosome maturation factor RimP of Macrococcus caseolyticus (strain JCSC5402) (Macrococcoides caseolyticum).